A 444-amino-acid polypeptide reads, in one-letter code: Methylenetetrahydrofolate--tRNA-(uracil-5-)-methyltransferase TrmFO (444 aa).

An FAD-binding site is contributed by 10 to 15; the sequence is GAGLAG.

It belongs to the MnmG family. TrmFO subfamily. FAD is required as a cofactor.

The protein resides in the cytoplasm. It carries out the reaction uridine(54) in tRNA + (6R)-5,10-methylene-5,6,7,8-tetrahydrofolate + NADH + H(+) = 5-methyluridine(54) in tRNA + (6S)-5,6,7,8-tetrahydrofolate + NAD(+). The catalysed reaction is uridine(54) in tRNA + (6R)-5,10-methylene-5,6,7,8-tetrahydrofolate + NADPH + H(+) = 5-methyluridine(54) in tRNA + (6S)-5,6,7,8-tetrahydrofolate + NADP(+). In terms of biological role, catalyzes the folate-dependent formation of 5-methyl-uridine at position 54 (M-5-U54) in all tRNAs. The protein is Methylenetetrahydrofolate--tRNA-(uracil-5-)-methyltransferase TrmFO of Streptococcus agalactiae serotype III (strain NEM316).